The sequence spans 234 residues: NLP effector protein 10 (234 aa).

The N-terminal stretch at 1–17 is a signal peptide; sequence MFKTFIIAAVAVATVRA. N-linked (GlcNAc...) asparagine glycosylation occurs at N65. The Conserved undecapeptide motif I motif lies at 101–111; sequence AIMYSWYFPKD. The Hepta-peptide GHRHDWE motif II motif lies at 118–124; the sequence is GHRHDWE.

The protein belongs to the Necrosis inducing protein (NPP1) family.

It localises to the secreted. Secreted effector that contributes moderately to virulence during infection by P.capsici. Does not cause visible reaction of C.annuum for several days after inoculation, but by 7 days after inoculation, small necrotic lesions become visible. Leads only to chlorotic areas, without necrosis at 7 days after non-host N.benthamiana leaves infection. The sequence is that of NLP effector protein 10 from Phytophthora capsici.